The chain runs to 578 residues: Zinc finger protein 248 (578 aa).

Residues 8–78 (VSFKDVCVDF…LEKGFPSQDP (71 aa)) enclose the KRAB domain. The segment at 239-263 (TVCKYNECGRTFIESLKLNISQRPH) adopts a C2H2-type 1; degenerate zinc-finger fold. K340 is covalently cross-linked (Glycyl lysine isopeptide (Lys-Gly) (interchain with G-Cter in SUMO2)). C2H2-type zinc fingers lie at residues 379–401 (FECGECGKTFWEKSNLTQHQRTH), 407–429 (YECTECGKAFCQKPHLTNHQRTH), 435–457 (YECKQCGKTFCVKSNLTEHQRTH), 463–485 (YECNACGKSFCHRSALTVHQRTH), 491–513 (FICNECGKSFCVKSNLIVHQRTH), 519–542 (YKCNECGKTFCEKSALTKHQRTHT), and 547–569 (YECNACGKTFSQRSVLTKHQRIH).

The protein belongs to the krueppel C2H2-type zinc-finger protein family.

It is found in the nucleus. In terms of biological role, may be involved in transcriptional regulation. This Pongo abelii (Sumatran orangutan) protein is Zinc finger protein 248 (ZNF248).